The chain runs to 336 residues: DNA-directed RNA polymerase subunit alpha (336 aa).

An alpha N-terminal domain (alpha-NTD) region spans residues 1–232 (MIQKNWQELI…DQLSVFVNFD (232 aa)). Positions 248-336 (FNPALLKKVD…DLAKRYEDQY (89 aa)) are alpha C-terminal domain (alpha-CTD).

Belongs to the RNA polymerase alpha chain family. In terms of assembly, homodimer. The RNAP catalytic core consists of 2 alpha, 1 beta, 1 beta' and 1 omega subunit. When a sigma factor is associated with the core the holoenzyme is formed, which can initiate transcription.

It carries out the reaction RNA(n) + a ribonucleoside 5'-triphosphate = RNA(n+1) + diphosphate. Functionally, DNA-dependent RNA polymerase catalyzes the transcription of DNA into RNA using the four ribonucleoside triphosphates as substrates. The polypeptide is DNA-directed RNA polymerase subunit alpha (Sinorhizobium fredii (strain NBRC 101917 / NGR234)).